The chain runs to 432 residues: Adenylosuccinate synthetase 2 (432 aa).

Residues 12-18 and 40-42 each bind GTP; these read GDEGKGR and GHT. Asp13 acts as the Proton acceptor in catalysis. Asp13 and Gly40 together coordinate Mg(2+). IMP contacts are provided by residues 13 to 16, 38 to 41, Thr128, Arg142, Gln222, Thr237, and Arg301; these read DEGK and NAGH. The Proton donor role is filled by His41. 297 to 303 lines the substrate pocket; the sequence is VNTGRPR. Residues Arg303, 329–331, and 411–413 each bind GTP; these read KLD and TTG.

This sequence belongs to the adenylosuccinate synthetase family. In terms of assembly, homodimer. The cofactor is Mg(2+).

It is found in the cytoplasm. The enzyme catalyses IMP + L-aspartate + GTP = N(6)-(1,2-dicarboxyethyl)-AMP + GDP + phosphate + 2 H(+). It functions in the pathway purine metabolism; AMP biosynthesis via de novo pathway; AMP from IMP: step 1/2. Plays an important role in the de novo pathway of purine nucleotide biosynthesis. Catalyzes the first committed step in the biosynthesis of AMP from IMP. This Burkholderia lata (strain ATCC 17760 / DSM 23089 / LMG 22485 / NCIMB 9086 / R18194 / 383) protein is Adenylosuccinate synthetase 2.